A 61-amino-acid polypeptide reads, in one-letter code: Photosystem II reaction center protein K (61 aa).

The propeptide occupies 1 to 24 (MLNIFNLICICFNSALFSSTFLVA). Residues 40–60 (MPVIPLFFLLLAFVWQAAVSF) traverse the membrane as a helical segment.

Belongs to the PsbK family. PSII is composed of 1 copy each of membrane proteins PsbA, PsbB, PsbC, PsbD, PsbE, PsbF, PsbH, PsbI, PsbJ, PsbK, PsbL, PsbM, PsbT, PsbX, PsbY, PsbZ, Psb30/Ycf12, at least 3 peripheral proteins of the oxygen-evolving complex and a large number of cofactors. It forms dimeric complexes.

The protein resides in the plastid. It is found in the chloroplast thylakoid membrane. Its function is as follows. One of the components of the core complex of photosystem II (PSII). PSII is a light-driven water:plastoquinone oxidoreductase that uses light energy to abstract electrons from H(2)O, generating O(2) and a proton gradient subsequently used for ATP formation. It consists of a core antenna complex that captures photons, and an electron transfer chain that converts photonic excitation into a charge separation. The chain is Photosystem II reaction center protein K from Sinapis alba (White mustard).